We begin with the raw amino-acid sequence, 180 residues long: Large ribosomal subunit protein mL41 (180 aa).

The N-terminal 21 residues, 1–21 (MKLVLVSTRGVRSLNSTNFPA), are a transit peptide targeting the mitochondrion.

This sequence belongs to the mitochondrion-specific ribosomal protein mL41 family. As to quaternary structure, component of the mitochondrial ribosome large subunit (39S) which comprises a 16S rRNA and about 50 distinct proteins.

The protein localises to the mitochondrion. The chain is Large ribosomal subunit protein mL41 (mrpl-41) from Caenorhabditis elegans.